The following is an 853-amino-acid chain: Auxin response factor 23 (853 aa).

The disordered stretch occupies residues 121–141 (KQQEDNGSTEEEVPSAPAAGH). Residues 149–251 (FCKTLTASDT…ELRVGVRRAM (103 aa)) constitute a DNA-binding region (TF-B3). Disordered stretches follow at residues 422 to 471 (ESEP…NNTP) and 647 to 723 (PAKS…QGVS). Over residues 425–455 (PNGTQRTFQTQENATPKSGFGNSSELESAQK) the composition is skewed to polar residues. The segment covering 672 to 686 (EWRRPDVTEVEKCSD) has biased composition (basic and acidic residues). The segment covering 706–723 (PSSQQASRNMSCKSQGVS) has biased composition (polar residues). The region spanning 725 to 809 (RSCKKVHKQG…HKIFIYTREE (85 aa)) is the PB1 domain. A disordered region spans residues 815-853 (PGTLNSRSEDSHANSMERGSVGREMRGCLSTSSLNSENC). Over residues 843–853 (LSTSSLNSENC) the composition is skewed to polar residues.

It belongs to the ARF family. In terms of assembly, homodimers and heterodimers.

The protein localises to the nucleus. Functionally, auxin response factors (ARFs) are transcriptional factors that bind specifically to the DNA sequence 5'-TGTCTC-3' found in the auxin-responsive promoter elements (AuxREs). In Oryza sativa subsp. indica (Rice), this protein is Auxin response factor 23 (ARF23).